The primary structure comprises 252 residues: 5'-methylthioadenosine/S-adenosylhomocysteine nucleosidase (252 aa).

E20 (proton acceptor) is an active-site residue. Substrate-binding positions include G86, I160, and 181-182 (ME). The Proton donor role is filled by D205.

Belongs to the PNP/UDP phosphorylase family. MtnN subfamily. Homodimer.

The enzyme catalyses S-adenosyl-L-homocysteine + H2O = S-(5-deoxy-D-ribos-5-yl)-L-homocysteine + adenine. The catalysed reaction is S-methyl-5'-thioadenosine + H2O = 5-(methylsulfanyl)-D-ribose + adenine. It catalyses the reaction 5'-deoxyadenosine + H2O = 5-deoxy-D-ribose + adenine. The protein operates within amino-acid biosynthesis; L-methionine biosynthesis via salvage pathway; S-methyl-5-thio-alpha-D-ribose 1-phosphate from S-methyl-5'-thioadenosine (hydrolase route): step 1/2. Its function is as follows. Catalyzes the irreversible cleavage of the glycosidic bond in both 5'-methylthioadenosine (MTA) and S-adenosylhomocysteine (SAH/AdoHcy) to adenine and the corresponding thioribose, 5'-methylthioribose and S-ribosylhomocysteine, respectively. Also cleaves 5'-deoxyadenosine, a toxic by-product of radical S-adenosylmethionine (SAM) enzymes, into 5-deoxyribose and adenine. Thus, is required for in vivo function of the radical SAM enzymes biotin synthase and lipoic acid synthase, that are inhibited by 5'-deoxyadenosine accumulation. The protein is 5'-methylthioadenosine/S-adenosylhomocysteine nucleosidase of Buchnera aphidicola subsp. Baizongia pistaciae (strain Bp).